We begin with the raw amino-acid sequence, 410 residues long: Chorismate synthase (410 aa).

NADP(+) is bound by residues R40 and R46. FMN contacts are provided by residues 129-131, 257-258, G302, 317-321, and R343; these read RSS, QA, and KPISS.

The protein belongs to the chorismate synthase family. Homotetramer. It depends on FMNH2 as a cofactor.

The enzyme catalyses 5-O-(1-carboxyvinyl)-3-phosphoshikimate = chorismate + phosphate. The protein operates within metabolic intermediate biosynthesis; chorismate biosynthesis; chorismate from D-erythrose 4-phosphate and phosphoenolpyruvate: step 7/7. Functionally, catalyzes the anti-1,4-elimination of the C-3 phosphate and the C-6 proR hydrogen from 5-enolpyruvylshikimate-3-phosphate (EPSP) to yield chorismate, which is the branch point compound that serves as the starting substrate for the three terminal pathways of aromatic amino acid biosynthesis. This reaction introduces a second double bond into the aromatic ring system. The chain is Chorismate synthase from Chlorobaculum parvum (strain DSM 263 / NCIMB 8327) (Chlorobium vibrioforme subsp. thiosulfatophilum).